Here is a 426-residue protein sequence, read N- to C-terminus: 2-(3-amino-3-carboxypropyl)histidine synthase subunit 1 (426 aa).

[4Fe-4S] cluster-binding residues include C133, C239, and C368.

Belongs to the DPH1/DPH2 family. DPH1 subfamily. As to quaternary structure, component of the 2-(3-amino-3-carboxypropyl)histidine synthase complex composed of DPH1, DPH2, DPH3 and a NADH-dependent reductase, predominantly CBR1. The cofactor is [4Fe-4S] cluster.

Its subcellular location is the cytoplasm. The enzyme catalyses L-histidyl-[translation elongation factor 2] + S-adenosyl-L-methionine = 2-[(3S)-amino-3-carboxypropyl]-L-histidyl-[translation elongation factor 2] + S-methyl-5'-thioadenosine + H(+). It functions in the pathway protein modification; peptidyl-diphthamide biosynthesis. In terms of biological role, catalyzes the first step of diphthamide biosynthesis, a post-translational modification of histidine which occurs in elongation factor 2. DPH1 and DPH2 transfer a 3-amino-3-carboxypropyl (ACP) group from S-adenosyl-L-methionine (SAM) to a histidine residue, the reaction is assisted by a reduction system comprising DPH3 and a NADH-dependent reductase, predominantly CBR1. This chain is 2-(3-amino-3-carboxypropyl)histidine synthase subunit 1 (DPH1), found in Eremothecium gossypii (strain ATCC 10895 / CBS 109.51 / FGSC 9923 / NRRL Y-1056) (Yeast).